The following is a 361-amino-acid chain: Probable pectinesterase 49 (361 aa).

The N-terminal stretch at 1 to 22 (MGYISLALVALLVFFASPVVLA) is a signal peptide. N-linked (GlcNAc...) asparagine glycosylation is present at Asn-128. Gln-174 contributes to the substrate binding site. The active-site Proton donor is the Asp-197. The active-site Nucleophile is the Asp-218. Residues Arg-275 and Trp-277 each coordinate substrate.

This sequence belongs to the pectinesterase family. In terms of tissue distribution, expressed in flower buds.

Its subcellular location is the secreted. The protein localises to the cell wall. It catalyses the reaction [(1-&gt;4)-alpha-D-galacturonosyl methyl ester](n) + n H2O = [(1-&gt;4)-alpha-D-galacturonosyl](n) + n methanol + n H(+). It participates in glycan metabolism; pectin degradation; 2-dehydro-3-deoxy-D-gluconate from pectin: step 1/5. In terms of biological role, acts in the modification of cell walls via demethylesterification of cell wall pectin. The protein is Probable pectinesterase 49 (PME49) of Arabidopsis thaliana (Mouse-ear cress).